An 892-amino-acid chain; its full sequence is LEAF RUST 10 DISEASE-RESISTANCE LOCUS RECEPTOR-LIKE PROTEIN KINASE-like 2.8 (892 aa).

A signal peptide spans M1–S27. Over N28–T496 the chain is Extracellular. N42, N71, N88, N112, N186, N222, N230, N286, N358, N384, N407, and N458 each carry an N-linked (GlcNAc...) asparagine glycan. Residues F497–C517 traverse the membrane as a helical segment. The Cytoplasmic segment spans residues F518–L892. T547 bears the Phosphothreonine mark. The 299-residue stretch at K556–L854 folds into the Protein kinase domain. Residues V562 to V570 and K584 contribute to the ATP site. Y629 bears the Phosphotyrosine mark. The active-site Proton acceptor is the D680. 2 positions are modified to phosphothreonine: T717 and T720.

Belongs to the protein kinase superfamily. Ser/Thr protein kinase family.

The protein localises to the membrane. The enzyme catalyses L-seryl-[protein] + ATP = O-phospho-L-seryl-[protein] + ADP + H(+). It carries out the reaction L-threonyl-[protein] + ATP = O-phospho-L-threonyl-[protein] + ADP + H(+). The protein is LEAF RUST 10 DISEASE-RESISTANCE LOCUS RECEPTOR-LIKE PROTEIN KINASE-like 2.8 of Arabidopsis thaliana (Mouse-ear cress).